Reading from the N-terminus, the 205-residue chain is High frequency lysogenization protein HflD homolog (205 aa).

The protein belongs to the HflD family.

The protein resides in the cytoplasm. It localises to the cell inner membrane. This is High frequency lysogenization protein HflD homolog from Shewanella baltica (strain OS223).